Reading from the N-terminus, the 111-residue chain is MLISVLKSKISYATVTGKDLFYVGSITIDSEIMKQANIIENEKVQVVNLNNGERLETYVIKGEPNSKTIALNGPAARRCEIGDQLFIISYAQVDPTRENIKPKLVDLKTGD.

Residue Ser-25 is the Schiff-base intermediate with substrate; via pyruvic acid of the active site. Ser-25 is subject to Pyruvic acid (Ser). Thr-57 is a binding site for substrate. The active-site Proton donor is the Tyr-58. Residue 73 to 75 (GPA) coordinates substrate.

Belongs to the PanD family. In terms of assembly, heterooctamer of four alpha and four beta subunits. It depends on pyruvate as a cofactor. Is synthesized initially as an inactive proenzyme, which is activated by self-cleavage at a specific serine bond to produce a beta-subunit with a hydroxyl group at its C-terminus and an alpha-subunit with a pyruvoyl group at its N-terminus.

Its subcellular location is the cytoplasm. The enzyme catalyses L-aspartate + H(+) = beta-alanine + CO2. It functions in the pathway cofactor biosynthesis; (R)-pantothenate biosynthesis; beta-alanine from L-aspartate: step 1/1. In terms of biological role, catalyzes the pyruvoyl-dependent decarboxylation of aspartate to produce beta-alanine. This Francisella tularensis subsp. holarctica (strain LVS) protein is Aspartate 1-decarboxylase.